A 377-amino-acid polypeptide reads, in one-letter code: Chaperone protein DnaJ (377 aa).

In terms of domain architecture, J spans 5–70; that stretch reads DYYEVLGVGR…NKKAAYDQFG (66 aa). The CR-type zinc-finger motif lies at 133–211; sequence GLTKELRIPT…CHGDGRVEKT (79 aa). Cys-146, Cys-149, Cys-163, Cys-166, Cys-185, Cys-188, Cys-199, and Cys-202 together coordinate Zn(2+). 4 CXXCXGXG motif repeats span residues 146 to 153, 163 to 170, 185 to 192, and 199 to 206; these read CDVCDGSG, CGTCHGQG, CPTCHGRG, and CSKCHGDG.

Belongs to the DnaJ family. In terms of assembly, homodimer. Requires Zn(2+) as cofactor.

Its subcellular location is the cytoplasm. In terms of biological role, participates actively in the response to hyperosmotic and heat shock by preventing the aggregation of stress-denatured proteins and by disaggregating proteins, also in an autonomous, DnaK-independent fashion. Unfolded proteins bind initially to DnaJ; upon interaction with the DnaJ-bound protein, DnaK hydrolyzes its bound ATP, resulting in the formation of a stable complex. GrpE releases ADP from DnaK; ATP binding to DnaK triggers the release of the substrate protein, thus completing the reaction cycle. Several rounds of ATP-dependent interactions between DnaJ, DnaK and GrpE are required for fully efficient folding. Also involved, together with DnaK and GrpE, in the DNA replication of plasmids through activation of initiation proteins. The protein is Chaperone protein DnaJ of Shewanella sp. (strain ANA-3).